Consider the following 689-residue polypeptide: Glycine--tRNA ligase beta subunit (689 aa).

The protein belongs to the class-II aminoacyl-tRNA synthetase family. As to quaternary structure, tetramer of two alpha and two beta subunits.

Its subcellular location is the cytoplasm. The catalysed reaction is tRNA(Gly) + glycine + ATP = glycyl-tRNA(Gly) + AMP + diphosphate. The chain is Glycine--tRNA ligase beta subunit from Escherichia coli O127:H6 (strain E2348/69 / EPEC).